The sequence spans 1080 residues: DNA-directed RNA polymerase subunit beta (1080 aa).

It belongs to the RNA polymerase beta chain family. In terms of assembly, in plastids the minimal PEP RNA polymerase catalytic core is composed of four subunits: alpha, beta, beta', and beta''. When a (nuclear-encoded) sigma factor is associated with the core the holoenzyme is formed, which can initiate transcription.

The protein localises to the plastid. It localises to the chloroplast. The catalysed reaction is RNA(n) + a ribonucleoside 5'-triphosphate = RNA(n+1) + diphosphate. Functionally, DNA-dependent RNA polymerase catalyzes the transcription of DNA into RNA using the four ribonucleoside triphosphates as substrates. This Mesostigma viride (Green alga) protein is DNA-directed RNA polymerase subunit beta.